A 514-amino-acid polypeptide reads, in one-letter code: Cytochrome P450 monooxygenase MO6277 (514 aa).

A helical transmembrane segment spans residues 6 to 26 (LTVLALLGGTLLLYCSGLVIY). Residue cysteine 457 participates in heme binding.

It belongs to the cytochrome P450 family. It depends on heme as a cofactor.

It is found in the membrane. The enzyme catalyses polyporic acid + reduced [NADPH--hemoprotein reductase] + O2 = ascocorynin + oxidized [NADPH--hemoprotein reductase] + H2O + H(+). Its pathway is secondary metabolite biosynthesis. Cytochrome P450 monooxygenase that hydroxylates polyporic acid produced by the nonribosomal peptide synthetase acyN to produce the less toxic metabolite ascocorynin. The hydrophobic substrate polyporic acid might approach the active site from the membrane and, after hydroxylation into ascocorynin, leaves into the cytoplasm. MO6277 appears vital to avoid high-level accumulation of polyporic acid in the fungal membrane. The polypeptide is Cytochrome P450 monooxygenase MO6277 (Ascocoryne sarcoides (Purple jellydisc fungus)).